We begin with the raw amino-acid sequence, 242 residues long: ATP synthase subunit a (242 aa).

The next 6 helical transmembrane spans lie at 29–49 (SSIYMLLATTLSLTYLYLAFY), 84–104 (FIPLVFSLFIFILFCNLLGMT), 114–134 (IIVTFTLALLIFLTVTIVGFI), 140–160 (FLTLFLPHGTPVWLAPLMIVI), 189–209 (VIASFTVSLMIYLKFLPIPLM), and 210–230 (VILIGFEIFIAILQAYIFTIL).

This sequence belongs to the ATPase A chain family. F-type ATPases have 2 components, CF(1) - the catalytic core - and CF(0) - the membrane proton channel. CF(1) has five subunits: alpha(3), beta(3), gamma(1), delta(1), epsilon(1). CF(0) has three main subunits: a(1), b(2) and c(9-12). The alpha and beta chains form an alternating ring which encloses part of the gamma chain. CF(1) is attached to CF(0) by a central stalk formed by the gamma and epsilon chains, while a peripheral stalk is formed by the delta and b chains.

It is found in the cell inner membrane. In terms of biological role, key component of the proton channel; it plays a direct role in the translocation of protons across the membrane. The sequence is that of ATP synthase subunit a from Rickettsia prowazekii (strain Madrid E).